The chain runs to 209 residues: MSKRPILIGITGGTGSGKSTVSKEICRRFDKELIVMIEQDSYYKDQSHLSIEERVKTNYDHPNAFDTELLVKHLKELSYWSKVEKPIYDFELHNRKNETEIVEPTEIIIVEGILVLEEKEIRDLLDIKIYVDTDADVRIIRRLVRDIKERGRSLDSVINQYLNVVRPMHMQFIEPSKRYADIIIPEGGHNKVAIDIIVGNIKQMVQKSE.

Residue 12–19 (GGTGSGKS) coordinates ATP.

The protein belongs to the uridine kinase family.

The protein resides in the cytoplasm. The catalysed reaction is uridine + ATP = UMP + ADP + H(+). It carries out the reaction cytidine + ATP = CMP + ADP + H(+). It functions in the pathway pyrimidine metabolism; CTP biosynthesis via salvage pathway; CTP from cytidine: step 1/3. Its pathway is pyrimidine metabolism; UMP biosynthesis via salvage pathway; UMP from uridine: step 1/1. The protein is Uridine kinase of Clostridium tetani (strain Massachusetts / E88).